Consider the following 219-residue polypeptide: Protein OPG170 (219 aa).

The N-terminal stretch at 1–16 (MYSLVFVILMCIPFSF) is a signal peptide. N-linked (GlcNAc...) asparagine; by host glycosylation is present at Asn70.

It belongs to the orthopoxvirus OPG170 family.

Its subcellular location is the secreted. May interact with several cellular chemokines to interfere with chemokine-glycosaminoglycan (GAG) interactions at the cell surface to alter chemotaxis of nearby responsive cells. This is Protein OPG170 (OPG170) from Bos taurus (Bovine).